Consider the following 630-residue polypeptide: Probable potassium transport system protein Kup (630 aa).

12 helical membrane passes run 17-37 (LAIA…LYSL), 51-71 (PSAI…VVGI), 105-125 (ITGL…GDAV), 144-164 (PQLS…LFWI), 175-195 (LFGP…VYHI), 218-238 (VLLA…AEAL), 255-275 (YVLV…LLLL), 283-303 (PFFL…STVA), 344-364 (IYVP…VIGF), 374-394 (YGIA…VVMV), 402-422 (LLVA…FGAN), and 428-448 (QGGW…MTWY).

The protein belongs to the HAK/KUP transporter (TC 2.A.72) family.

The protein localises to the cell inner membrane. It carries out the reaction K(+)(in) + H(+)(in) = K(+)(out) + H(+)(out). In terms of biological role, transport of potassium into the cell. Likely operates as a K(+):H(+) symporter. The protein is Probable potassium transport system protein Kup of Burkholderia thailandensis (strain ATCC 700388 / DSM 13276 / CCUG 48851 / CIP 106301 / E264).